Reading from the N-terminus, the 20-residue chain is L-amino-acid oxidase L2 (20 aa).

Belongs to the flavin monoamine oxidase family. FIG1 subfamily. In terms of assembly, monomer. This is in contrast with most of its orthologs, that are non-covalently linked homodimers. Requires FAD as cofactor. In terms of processing, N-glycosylated. In terms of tissue distribution, expressed by the venom gland.

The protein localises to the secreted. The catalysed reaction is an L-alpha-amino acid + O2 + H2O = a 2-oxocarboxylate + H2O2 + NH4(+). It carries out the reaction L-leucine + O2 + H2O = 4-methyl-2-oxopentanoate + H2O2 + NH4(+). The enzyme catalyses L-phenylalanine + O2 + H2O = 3-phenylpyruvate + H2O2 + NH4(+). It catalyses the reaction L-tryptophan + O2 + H2O = indole-3-pyruvate + H2O2 + NH4(+). The catalysed reaction is L-methionine + O2 + H2O = 4-methylsulfanyl-2-oxobutanoate + H2O2 + NH4(+). It carries out the reaction L-isoleucine + O2 + H2O = (S)-3-methyl-2-oxopentanoate + H2O2 + NH4(+). The enzyme catalyses L-tyrosine + O2 + H2O = 3-(4-hydroxyphenyl)pyruvate + H2O2 + NH4(+). Functionally, catalyzes an oxidative deamination of predominantly hydrophobic and aromatic L-amino acids, thus producing hydrogen peroxide that may contribute to the diverse toxic effects of this enzyme. Is active on L-Ile, L-Leu, L-Met, L-Phe, L-Trp, and L-Tyr. Exhibits diverse biological activities, such as hemorrhage, hemolysis, edema, apoptosis of vascular endothelial cells or tumor cell lines, antibacterial and antiparasitic activities, as well as regulation of platelet aggregation. Its effect on platelets is controversial, since it either induces aggregation or inhibits agonist-induced aggregation. These different effects are probably due to different experimental conditions. This is L-amino-acid oxidase L2 from Daboia russelii (Russel's viper).